A 106-amino-acid chain; its full sequence is Urease subunit beta (106 aa).

The protein belongs to the urease beta subunit family. In terms of assembly, heterotrimer of UreA (gamma), UreB (beta) and UreC (alpha) subunits. Three heterotrimers associate to form the active enzyme.

It is found in the cytoplasm. The catalysed reaction is urea + 2 H2O + H(+) = hydrogencarbonate + 2 NH4(+). It participates in nitrogen metabolism; urea degradation; CO(2) and NH(3) from urea (urease route): step 1/1. The sequence is that of Urease subunit beta from Parasynechococcus marenigrum (strain WH8102).